We begin with the raw amino-acid sequence, 1159 residues long: PAN2-PAN3 deadenylation complex catalytic subunit pan2 (1159 aa).

A WD repeat occupies 276–315 (ANVSFMLGIDISPSGEALAINDAECMVHLWGSPAKIHFNE). The interval 316–451 (MSKEVELADV…GAKLNGEAED (136 aa)) is linker. The 370-residue stretch at 452 to 821 (DPLLKYSNVE…VPCVLAFQVK (370 aa)) folds into the USP domain. The Exonuclease domain occupies 872–1048 (LDTEFVDLEK…IEDARMALRL (177 aa)). Positions 873, 875, 982, and 1041 each coordinate a divalent metal cation. A disordered region spans residues 1094-1159 (TAVTMQNTNS…GDFFGGSPLK (66 aa)). A compositionally biased stretch (polar residues) spans 1096–1106 (VTMQNTNSGRN). The span at 1107–1128 (TPTVPDAAGAPAVPASAPTTPG) shows a compositional bias: low complexity. Residues 1143–1153 (TFSGPGAGDFF) are compositionally biased toward gly residues.

It belongs to the peptidase C19 family. PAN2 subfamily. In terms of assembly, forms a heterotrimer with an asymmetric homodimer of the regulatory subunit pan3 to form the poly(A)-nuclease (PAN) deadenylation complex. A divalent metal cation is required as a cofactor.

It localises to the cytoplasm. The enzyme catalyses Exonucleolytic cleavage of poly(A) to 5'-AMP.. Its activity is regulated as follows. Positively regulated by the regulatory subunit pan3. In terms of biological role, catalytic subunit of the poly(A)-nuclease (PAN) deadenylation complex, one of two cytoplasmic mRNA deadenylases involved in mRNA turnover. PAN specifically shortens poly(A) tails of RNA and the activity is stimulated by poly(A)-binding protein pab1. PAN deadenylation is followed by rapid degradation of the shortened mRNA tails by the CCR4-NOT complex. Deadenylated mRNAs are then degraded by two alternative mechanisms, namely exosome-mediated 3'-5' exonucleolytic degradation, or deadenylation-dependent mRNA decaping and subsequent 5'-3' exonucleolytic degradation by xrn1. May also be involved in post-transcriptional maturation of mRNA poly(A) tails. The polypeptide is PAN2-PAN3 deadenylation complex catalytic subunit pan2 (Aspergillus terreus (strain NIH 2624 / FGSC A1156)).